The chain runs to 340 residues: Gallate dioxygenase (340 aa).

His-45 acts as the Proton donor in catalysis. His-113 functions as the Proton acceptor in the catalytic mechanism.

Belongs to the LigB/MhpB extradiol dioxygenase family. The cofactor is Fe(2+).

The enzyme catalyses 3,4,5-trihydroxybenzoate + O2 = (1E)-4-oxobut-1-ene-1,2,4-tricarboxylate + 2 H(+). Ring-cleavage dioxygenase that acts specifically on gallate to produce the keto-tautomer of 4-oxalomesaconate. Mediates the first step of gallate degradation pathway. The protein is Gallate dioxygenase (galA) of Pseudomonas putida (strain ATCC 47054 / DSM 6125 / CFBP 8728 / NCIMB 11950 / KT2440).